A 237-amino-acid chain; its full sequence is Eukaryotic translation initiation factor 3 subunit J (237 aa).

The tract at residues 20-64 (ANNINKWEGEDDDEDVKESWEDEEEKKDEEKPTKTEAPAKTKPNK) is disordered. Residues 28-46 (GEDDDEDVKESWEDEEEKK) are compositionally biased toward acidic residues. Over residues 47–58 (DEEKPTKTEAPA) the composition is skewed to basic and acidic residues. The stretch at 63–115 (NKVLKAKLLEQECLEKEEEAKRLANMSTEEKLAEKLRLQKIQEESDLKSALET) forms a coiled coil.

This sequence belongs to the eIF-3 subunit J family. As to quaternary structure, component of the eukaryotic translation initiation factor 3 (eIF-3) complex. The eIF-3 complex interacts with pix.

The protein localises to the cytoplasm. Component of the eukaryotic translation initiation factor 3 (eIF-3) complex, which is involved in protein synthesis of a specialized repertoire of mRNAs and, together with other initiation factors, stimulates binding of mRNA and methionyl-tRNAi to the 40S ribosome. The eIF-3 complex specifically targets and initiates translation of a subset of mRNAs involved in cell proliferation. The chain is Eukaryotic translation initiation factor 3 subunit J from Drosophila grimshawi (Hawaiian fruit fly).